The primary structure comprises 218 residues: 3-dehydroquinate dehydratase (218 aa).

Residues 29-31 (EFR) and Arg-56 contribute to the 3-dehydroquinate site. Catalysis depends on His-116, which acts as the Proton donor/acceptor. Lys-142 acts as the Schiff-base intermediate with substrate in catalysis. 3 residues coordinate 3-dehydroquinate: Arg-180, Ser-200, and Gln-204.

This sequence belongs to the type-I 3-dehydroquinase family. In terms of assembly, homodimer.

The catalysed reaction is 3-dehydroquinate = 3-dehydroshikimate + H2O. It functions in the pathway metabolic intermediate biosynthesis; chorismate biosynthesis; chorismate from D-erythrose 4-phosphate and phosphoenolpyruvate: step 3/7. Functionally, involved in the third step of the chorismate pathway, which leads to the biosynthesis of aromatic amino acids. Catalyzes the cis-dehydration of 3-dehydroquinate (DHQ) and introduces the first double bond of the aromatic ring to yield 3-dehydroshikimate. The protein is 3-dehydroquinate dehydratase of Methanococcus maripaludis (strain C6 / ATCC BAA-1332).